The sequence spans 315 residues: Ribosomal RNA small subunit methyltransferase H (315 aa).

Residues 1-21 (MNVVNVVPMHLPPPPPRPRGE) form a disordered region. Residues 51–53 (GGH), Asp69, Phe96, Asp117, and Gln124 contribute to the S-adenosyl-L-methionine site. Positions 281 to 315 (KKPVTAGDDEVEGNPRARSAKLRAARRVGGAEALA) are disordered.

This sequence belongs to the methyltransferase superfamily. RsmH family.

Its subcellular location is the cytoplasm. The enzyme catalyses cytidine(1402) in 16S rRNA + S-adenosyl-L-methionine = N(4)-methylcytidine(1402) in 16S rRNA + S-adenosyl-L-homocysteine + H(+). Its function is as follows. Specifically methylates the N4 position of cytidine in position 1402 (C1402) of 16S rRNA. The chain is Ribosomal RNA small subunit methyltransferase H from Sorangium cellulosum (strain So ce56) (Polyangium cellulosum (strain So ce56)).